Reading from the N-terminus, the 202-residue chain is Ribosomal RNA small subunit methyltransferase G (202 aa).

S-adenosyl-L-methionine contacts are provided by residues G75, F80, 125-126 (VQ), and R139.

Belongs to the methyltransferase superfamily. RNA methyltransferase RsmG family.

It is found in the cytoplasm. Functionally, specifically methylates the N7 position of a guanine in 16S rRNA. The chain is Ribosomal RNA small subunit methyltransferase G from Mesomycoplasma hyopneumoniae (strain 232) (Mycoplasma hyopneumoniae).